A 491-amino-acid polypeptide reads, in one-letter code: Katanin p60 ATPase-containing subunit A1 (491 aa).

The interaction with KATNB1 stretch occupies residues 1 to 29; it reads MSLLMISENVKLAREYALLGNYDSAMVYY. The segment at 1 to 75 is interaction with dynein and NDEL1; that stretch reads MSLLMISENV…VKDIMKTLES (75 aa). The segment at 1 to 185 is interaction with microtubules; the sequence is MSLLMISENV…EPETNKFDST (185 aa). A phosphoserine; by DYRK2 mark is found at S42 and S109. Residues 87–185 are disordered; it reads QHDLPASEGE…EPETNKFDST (99 aa). Position 133 is a phosphothreonine; by DYRK2 (T133). A compositionally biased stretch (basic and acidic residues) spans 145 to 169; that stretch reads HNDRGKAVRCREKKEQNKGREEKNK. S170 is modified (phosphoserine). 249–256 serves as a coordination point for ATP; the sequence is GPPGTGKT.

Belongs to the AAA ATPase family. Katanin p60 subunit A1 subfamily. In terms of assembly, can homooligomerize into hexameric rings, which may be promoted by interaction with microtubules. Interacts with KATNB1, which may serve as a targeting subunit. Interacts with ASPM; the katanin complex formation KATNA1:KATNB1 is required for the association of ASPM Interacts with dynein and NDEL1. Associates with the E3 ligase complex containing DYRK2, EDD/UBR5, DDB1 and DCAF1 proteins (EDVP complex). Interacts with KLHL42 (via the kelch domains). Interacts with CUL3; the interaction is enhanced by KLHL42. Interacts with KATNB1 and KATNBL1. Interacts with CAMSAP2 and CAMSAP3; leading to regulate the length of CAMSAP-decorated microtubule stretches. In terms of processing, phosphorylation by DYRK2 triggers ubiquitination and subsequent degradation. Post-translationally, ubiquitinated by the BCR(KLHL42) E3 ubiquitin ligase complex, leading to its proteasomal degradation. Ubiquitinated by the EDVP E3 ligase complex and subsequently targeted for proteasomal degradation.

Its subcellular location is the cytoplasm. The protein localises to the midbody. It is found in the cytoskeleton. The protein resides in the microtubule organizing center. It localises to the centrosome. Its subcellular location is the spindle pole. The protein localises to the spindle. It carries out the reaction n ATP + n H2O + a microtubule = n ADP + n phosphate + (n+1) alpha/beta tubulin heterodimers.. Its activity is regulated as follows. ATPase activity is stimulated by microtubules, which promote homooligomerization. ATP-dependent microtubule severing is stimulated by interaction with KATNB1. In terms of biological role, catalytic subunit of a complex which severs microtubules in an ATP-dependent manner. Microtubule severing may promote rapid reorganization of cellular microtubule arrays and the release of microtubules from the centrosome following nucleation. Microtubule release from the mitotic spindle poles may allow depolymerization of the microtubule end proximal to the spindle pole, leading to poleward microtubule flux and poleward motion of chromosome. Microtubule release within the cell body of neurons may be required for their transport into neuronal processes by microtubule-dependent motor proteins. This transport is required for axonal growth. The sequence is that of Katanin p60 ATPase-containing subunit A1 from Macaca fascicularis (Crab-eating macaque).